The following is a 505-amino-acid chain: Beta-agarase (505 aa).

An N-terminal signal peptide occupies residues 1 to 23 (MLKVIPWLLVTSSLVAIPTYIHA). Glu200 functions as the Proton donor in the catalytic mechanism. Glu322 functions as the Nucleophile in the catalytic mechanism.

It belongs to the glycosyl hydrolase 86 family.

Its subcellular location is the secreted. It carries out the reaction Hydrolysis of (1-&gt;4)-beta-D-galactosidic linkages in agarose, giving the tetramer as the predominant product.. In terms of biological role, hydrolase that cleaves agar at the (1-&gt;4) linkage, producing tetrameric saccharide molecules. Is specific for agar and agarose and does not digest alginate or carrageenan. The polypeptide is Beta-agarase (Pseudoalteromonas atlantica (Alteromonas atlantica)).